The chain runs to 220 residues: Thiamine-phosphate synthase (220 aa).

Residues Gln-39–Lys-43 and Asn-80 contribute to the 4-amino-2-methyl-5-(diphosphooxymethyl)pyrimidine site. Residues Asp-81 and Asp-100 each coordinate Mg(2+). Residue Ser-119 coordinates 4-amino-2-methyl-5-(diphosphooxymethyl)pyrimidine. Position 145-147 (Thr-145–Thr-147) interacts with 2-[(2R,5Z)-2-carboxy-4-methylthiazol-5(2H)-ylidene]ethyl phosphate. Lys-148 lines the 4-amino-2-methyl-5-(diphosphooxymethyl)pyrimidine pocket. Gly-176 lines the 2-[(2R,5Z)-2-carboxy-4-methylthiazol-5(2H)-ylidene]ethyl phosphate pocket.

Belongs to the thiamine-phosphate synthase family. Requires Mg(2+) as cofactor.

The enzyme catalyses 2-[(2R,5Z)-2-carboxy-4-methylthiazol-5(2H)-ylidene]ethyl phosphate + 4-amino-2-methyl-5-(diphosphooxymethyl)pyrimidine + 2 H(+) = thiamine phosphate + CO2 + diphosphate. It catalyses the reaction 2-(2-carboxy-4-methylthiazol-5-yl)ethyl phosphate + 4-amino-2-methyl-5-(diphosphooxymethyl)pyrimidine + 2 H(+) = thiamine phosphate + CO2 + diphosphate. The catalysed reaction is 4-methyl-5-(2-phosphooxyethyl)-thiazole + 4-amino-2-methyl-5-(diphosphooxymethyl)pyrimidine + H(+) = thiamine phosphate + diphosphate. It participates in cofactor biosynthesis; thiamine diphosphate biosynthesis; thiamine phosphate from 4-amino-2-methyl-5-diphosphomethylpyrimidine and 4-methyl-5-(2-phosphoethyl)-thiazole: step 1/1. Its function is as follows. Condenses 4-methyl-5-(beta-hydroxyethyl)thiazole monophosphate (THZ-P) and 2-methyl-4-amino-5-hydroxymethyl pyrimidine pyrophosphate (HMP-PP) to form thiamine monophosphate (TMP). The protein is Thiamine-phosphate synthase of Mycobacterium ulcerans (strain Agy99).